The following is a 301-amino-acid chain: MESMTLHPPSETANADIDVVLVTGLSGAGRGTTAKVLEDLGWYVADNLPPELITRMVDLGLAAGSRITQLAVVMDVRSRGFTGDLESVRADLATRGISPRVLFLEASDESLVRRYENNRRSHPLQGGQTLAEGIAAERALLSSIRASADLVIDTSSLPVPALRAAIERAFSSESVAHISVTVESFGFKYGLPMDADMVVDVRFLPNPHWVDELRPHTGQHPSVSHYVLSQPGADEFLDTYHRLLNLVIDGYRREGKRYMTIAVGCTGGKHRSVAITEALAASLAPDDDLSVRVLHRDLGRE.

24–31 provides a ligand contact to ATP; that stretch reads GLSGAGRG. Position 75–78 (75–78) interacts with GTP; sequence DVRS.

Belongs to the RapZ-like family.

Functionally, displays ATPase and GTPase activities. The polypeptide is Nucleotide-binding protein MAB_2783c (Mycobacteroides abscessus (strain ATCC 19977 / DSM 44196 / CCUG 20993 / CIP 104536 / JCM 13569 / NCTC 13031 / TMC 1543 / L948) (Mycobacterium abscessus)).